Reading from the N-terminus, the 798-residue chain is Palmitoyl thioesterase CPT1C (798 aa).

The Cytoplasmic segment spans residues 1–52; that stretch reads MAEAHQASSLLSSLSSDGAEVELSSPVWQEIYLCALRSWKRHLWRVWNDFLA. A helical transmembrane segment spans residues 53–75; it reads GVVPATPLSWLFLFSTIQLACLL. Topologically, residues 76-103 are lumenal; the sequence is QLDPSLGLMEKIKELLPDWGGQHHQLQG. The chain crosses the membrane as a helical span at residues 104-126; that stretch reads FLSAAVFASCLWGALIFTLHVAL. Residues 127–798 lie on the Cytoplasmic side of the membrane; the sequence is RLLLSHHGWL…PNTPTSSTNL (672 aa). His469 serves as the catalytic Proton acceptor. CoA is bound at residue 551–563; the sequence is GKSFIKCCHVSSD. (R)-carnitine is bound by residues Tyr585, Ser587, and Thr598. The interval 759–798 is required for interaction with GRIA1; it reads LFRVGQHFKRQFRGENSDYRYNFLSCKTVDPNTPTSSTNL.

It belongs to the carnitine/choline acetyltransferase family. Peripherally associated with AMPAR complex. AMPAR complex consists of an inner core made of 4 pore-forming GluA/GRIA proteins (GRIA1, GRIA2, GRIA3 and GRIA4) and 4 major auxiliary subunits arranged in a twofold symmetry. One of the two pairs of distinct binding sites is occupied either by CNIH2, CNIH3 or CACNG2, CACNG3. The other harbors CACNG2, CACNG3, CACNG4, CACNG8 or GSG1L. This inner core of AMPAR complex is complemented by outer core constituents binding directly to the GluA/GRIA proteins at sites distinct from the interaction sites of the inner core constituents. Outer core constituents include at least PRRT1, PRRT2, CKAMP44/SHISA9, FRRS1L and NRN1. The proteins of the inner and outer core serve as a platform for other, more peripherally associated AMPAR constituents, including CPT1C. Alone or in combination, these auxiliary subunits control the gating and pharmacology of the AMPAR complex and profoundly impact their biogenesis and protein processing. Interacts with SACM1L; the interaction regulates SACM1L phosphatidylinositol-3-phosphatase activity and translocation to endoplasmic reticulum/trans Golgi network in a malonyl-CoA dependent manner. Interacts with ATL1. In terms of tissue distribution, predominantly expressed in brain (at protein level) and testis, highly expressed in the hippocampus, amygdala and cerebellum. Expressed in neurons but not astrocytes. Expressed in the ventral horn from spinal cords.

It is found in the synapse. The protein localises to the cell projection. It localises to the axon. Its subcellular location is the dendrite. The protein resides in the dendritic spine. It is found in the endoplasmic reticulum membrane. It carries out the reaction S-hexadecanoyl-L-cysteinyl-[protein] + H2O = L-cysteinyl-[protein] + hexadecanoate + H(+). In terms of biological role, palmitoyl thioesterase specifically expressed in the endoplasmic reticulum of neurons. Modulates the trafficking of the glutamate receptor, AMPAR, to plasma membrane through depalmitoylation of GRIA1. Also regulates AMPR trafficking through the regulation of SACM1L phosphatidylinositol-3-phosphatase activity by interaction in a malonyl-CoA dependent manner. Binds malonyl-CoA and couples malonyl-CoA to ceramide levels, necessary for proper spine maturation and contributing to systemic energy homeostasis and appetite control. Binds to palmitoyl-CoA, but does not have carnitine palmitoyltransferase 1 catalytic activity or at very low levels. The polypeptide is Palmitoyl thioesterase CPT1C (Cpt1c) (Mus musculus (Mouse)).